Consider the following 407-residue polypeptide: Imidazolonepropionase (407 aa).

2 residues coordinate Fe(3+): His-75 and His-77. 2 residues coordinate Zn(2+): His-75 and His-77. 4-imidazolone-5-propanoate-binding residues include Arg-84, Tyr-142, and His-169. Tyr-142 contributes to the N-formimidoyl-L-glutamate binding site. Residue His-232 participates in Fe(3+) binding. His-232 is a binding site for Zn(2+). Gln-235 provides a ligand contact to 4-imidazolone-5-propanoate. Asp-306 is a binding site for Fe(3+). Position 306 (Asp-306) interacts with Zn(2+). N-formimidoyl-L-glutamate contacts are provided by Asn-308 and Gly-310. Thr-311 is a binding site for 4-imidazolone-5-propanoate.

The protein belongs to the metallo-dependent hydrolases superfamily. HutI family. Zn(2+) serves as cofactor. It depends on Fe(3+) as a cofactor.

The protein localises to the cytoplasm. The enzyme catalyses 4-imidazolone-5-propanoate + H2O = N-formimidoyl-L-glutamate. The protein operates within amino-acid degradation; L-histidine degradation into L-glutamate; N-formimidoyl-L-glutamate from L-histidine: step 3/3. In terms of biological role, catalyzes the hydrolytic cleavage of the carbon-nitrogen bond in imidazolone-5-propanoate to yield N-formimidoyl-L-glutamate. It is the third step in the universal histidine degradation pathway. The protein is Imidazolonepropionase of Rhodococcus jostii (strain RHA1).